The following is a 615-amino-acid chain: Lipoprotein LpqB (615 aa).

An N-terminal signal peptide occupies residues 1 to 29 (MGADRGRGGRRRPARVVAYAVGGVVLLAG). A lipid anchor (N-palmitoyl cysteine) is attached at Cys-30. Cys-30 carries the S-diacylglycerol cysteine lipid modification. Residues 100 to 123 (PDESATVLAGGPGTESDHSGNRED) are disordered. Basic and acidic residues predominate over residues 114–123 (ESDHSGNRED).

It belongs to the LpqB lipoprotein family.

It is found in the cell membrane. This Streptomyces coelicolor (strain ATCC BAA-471 / A3(2) / M145) protein is Lipoprotein LpqB.